Here is a 206-residue protein sequence, read N- to C-terminus: CASP-like protein 2C1 (206 aa).

Residues 1–31 (MSVLGVGPRTVTPHLRKGMMESSSGISLARA) are Cytoplasmic-facing. A helical transmembrane segment spans residues 32–52 (EAFLRLFAILVLVLTACLLGF). The Extracellular segment spans residues 53-71 (DTQTKLLFSTIKKTATFRD). The chain crosses the membrane as a helical span at residues 72-92 (LGALQVVVYVDSVAAGYNLLQ). Topologically, residues 93 to 111 (LGRGFISAKLKGKLINVSY) are cytoplasmic. Residues 112-132 (VTLPWVCFLLDQAAVYTVFSA) form a helical membrane-spanning segment. Topologically, residues 133–161 (NTAALQASIIAVTGESSLQWMKVCNRYTR) are extracellular. Residues 162 to 182 (FCIQVGGALLSGYLASLLMVL) form a helical membrane-spanning segment. The Cytoplasmic portion of the chain corresponds to 183 to 206 (LSSLSAFSLFRLYSPKQFHLLKPT).

This sequence belongs to the Casparian strip membrane proteins (CASP) family. In terms of assembly, homodimer and heterodimers.

The protein resides in the cell membrane. In Vitis vinifera (Grape), this protein is CASP-like protein 2C1.